The following is a 334-amino-acid chain: Sterol 4-C-methyltransferase strm-1 (334 aa).

Belongs to the class I-like SAM-binding methyltransferase superfamily. Erg6/SMT family. As to expression, expressed in the pharynx and hypodermal syncytium.

It carries out the reaction 5alpha-cholest-7-en-3-one + S-adenosyl-L-methionine = 4alpha-methyl-5alpha-cholest-7-en-3-one + S-adenosyl-L-homocysteine + H(+). It participates in steroid hormone biosynthesis; dafachronic acid biosynthesis. In terms of biological role, catalyzes the methyl transfer from S-adenosyl-methionine to the C-4 of the A-ring sterols such as lathosterone (5alpha-cholest-7-en-3-one) thereby rendering them unsuitable as ligand precursors. May irreversibly shunt sterols away from hormone dafachronic acid production. Dafachronic acids act as ligands and bind directly to the nuclear hormone receptor (NHR) daf-12 suppressing dauer formation and inducing reproductive growth. By reducing the biosynthesis of dafachronic acids, this methyltransferase can regulate dauer larva formation. This Caenorhabditis elegans protein is Sterol 4-C-methyltransferase strm-1 (strm-1).